Reading from the N-terminus, the 578-residue chain is Protein O-linked-mannose beta-1,4-N-acetylglucosaminyltransferase 2 (578 aa).

At 1–4 the chain is on the cytoplasmic side; it reads MNIS. The chain crosses the membrane as a helical; Signal-anchor for type II membrane protein span at residues 5–25; that stretch reads AVFSALLVSIMAAVLWKHVKL. Residues 26-578 lie on the Lumenal side of the membrane; it reads LDQFYVIEEE…PFAEVLVCST (553 aa). N-linked (GlcNAc...) asparagine glycans are attached at residues N98, N275, N335, N451, N541, and N563. Residues 484-578 form the Fibronectin type-III domain; the sequence is RESKCQASAQ…PFAEVLVCST (95 aa).

The protein belongs to the glycosyltransferase 61 family.

The protein localises to the endoplasmic reticulum membrane. The catalysed reaction is 3-O-(alpha-D-mannosyl)-L-threonyl-[protein] + UDP-N-acetyl-alpha-D-glucosamine = 3-O-(N-acetyl-beta-D-glucosaminyl-(1-&gt;4)-alpha-D-mannosyl)-L-threonyl-[protein] + UDP + H(+). It participates in protein modification; protein glycosylation. O-linked mannose beta-1,4-N-acetylglucosaminyltransferase that transfers UDP-N-acetyl-D-glucosamine to the 4-position of the mannose to generate N-acetyl-D-glucosamine-beta-1,4-O-D-mannosylprotein. Involved in the biosynthesis of the phosphorylated O-mannosyl trisaccharide (N-acetylgalactosamine-beta-3-N-acetylglucosamine-beta-4-(phosphate-6-)mannose), a carbohydrate structure present in alpha-dystroglycan (DAG1), which is required for binding laminin G-like domain-containing extracellular proteins with high affinity. The chain is Protein O-linked-mannose beta-1,4-N-acetylglucosaminyltransferase 2 (pomgnt2) from Xenopus laevis (African clawed frog).